A 620-amino-acid polypeptide reads, in one-letter code: MSKRQSSVQIRQLFGPALRSRISPASSELETLSPPRLSPRDPLGDMYPEESRGSGGVAAVDFLEGTYDYAAPNPATTPLYSQSSTGYYSAPLETNGPPSEGSLQSLGSGPTSPLVFVPSSPRLSPFMHPPSHHYLETTSTPVYRSSHQGASREDQCGSREDTCSLGELGAGAGAGGFEMAKDTRFCAVCSDYASGYHYGVWSCEGCKAFFKRSIQGHNDYMCPATNQCTIDRNRRKSCQACRLRKCYEVGMMKGGVRKDRIRILRRDKRRTGVGDGDKVVKGQEHKTVHYDGRKRSSTGGGGGGGGGRLSVTSIPPEQVLLLLQGAEPPILCSRQKLSRPYTEVTMMTLLTSMADKELVHMIAWAKKLPGFLQLSLHDQVLLLESSWLEVLMIGLIWRSIHCPGKLIFAQDLILDRNEGDCVEGMTEIFDMLLATASRFRVLKLKPEEFVCLKAIILLNSGAFSFCTGTMEPLHNSAAVQSMLDTITDALIHYISQSGYLAQEQARRQAQLLLLLSHIRHMSNKGMEHLYSMKCKNKVPLYDLLLEMLDAHRLHHPVRAPQSLSQVDRDPPSTSSGGGGIAPGSISASRGRIESPSRGPFAPSVLQYGGSRPDCTPALQD.

2 stretches are compositionally biased toward polar residues: residues 1-10 (MSKRQSSVQI) and 101-111 (GSLQSLGSGPT). 2 disordered regions span residues 1 to 55 (MSKR…RGSG) and 88 to 111 (YSAP…SGPT). The tract at residues 1 to 185 (MSKRQSSVQI…GFEMAKDTRF (185 aa)) is modulating. NR C4-type zinc fingers lie at residues 186–206 (CAVC…CEGC) and 222–246 (CPAT…LRKC). The nuclear receptor DNA-binding region spans 186 to 251 (CAVCSDYASG…RLRKCYEVGM (66 aa)). The tract at residues 252–314 (MKGGVRKDRI…GGGRLSVTSI (63 aa)) is hinge. A disordered region spans residues 286-308 (KTVHYDGRKRSSTGGGGGGGGGR). Over residues 298–308 (TGGGGGGGGGR) the composition is skewed to gly residues. In terms of domain architecture, NR LBD spans 315-551 (PPEQVLLLLQ…DLLLEMLDAH (237 aa)). The tract at residues 558 to 620 (RAPQSLSQVD…RPDCTPALQD (63 aa)) is disordered.

It belongs to the nuclear hormone receptor family. NR3 subfamily. In terms of assembly, binds DNA as a homodimer. Can form a heterodimer with ER-beta. In terms of tissue distribution, widely expressed in brain, ovary, testis, and female liver.

The protein localises to the nucleus. Functionally, the steroid hormones and their receptors are involved in the regulation of eukaryotic gene expression and affect cellular proliferation and differentiation in target tissues. The chain is Estrogen receptor (esr1) from Oryzias latipes (Japanese rice fish).